Here is a 402-residue protein sequence, read N- to C-terminus: Phosphoglycerate kinase (402 aa).

Residues 24–26 (DLN), Arg39, 62–65 (HLGR), Arg121, and Arg161 each bind substrate. ATP contacts are provided by residues Lys211, Gly299, Glu330, and 359 to 362 (GGDS).

It belongs to the phosphoglycerate kinase family. As to quaternary structure, monomer.

The protein localises to the cytoplasm. It catalyses the reaction (2R)-3-phosphoglycerate + ATP = (2R)-3-phospho-glyceroyl phosphate + ADP. It participates in carbohydrate degradation; glycolysis; pyruvate from D-glyceraldehyde 3-phosphate: step 2/5. The sequence is that of Phosphoglycerate kinase from Corynebacterium urealyticum (strain ATCC 43042 / DSM 7109).